The following is a 124-amino-acid chain: Ribonuclease pancreatic (124 aa).

Residues 1–15 are compositionally biased toward basic and acidic residues; the sequence is KESPAKKFQRQHMDP. The interval 1-24 is disordered; it reads KESPAKKFQRQHMDPDSSSSNSSN. The substrate site is built by lysine 7 and arginine 10. The active-site Proton acceptor is histidine 12. Asparagine 21 and asparagine 34 each carry an N-linked (GlcNAc...) asparagine glycan. Intrachain disulfides connect cysteine 26–cysteine 84, cysteine 40–cysteine 95, cysteine 58–cysteine 110, and cysteine 65–cysteine 72. Residues 41–45 and lysine 66 each bind substrate; that span reads KPVNT. An N-linked (GlcNAc...) asparagine glycan is attached at asparagine 76. Arginine 85 is a substrate binding site. Histidine 119 functions as the Proton donor in the catalytic mechanism.

The protein belongs to the pancreatic ribonuclease family. In terms of assembly, monomer. Interacts with and forms tight 1:1 complexes with RNH1. Dimerization of two such complexes may occur. Interaction with RNH1 inhibits this protein. In terms of tissue distribution, pancreas.

The protein resides in the secreted. It carries out the reaction an [RNA] containing cytidine + H2O = an [RNA]-3'-cytidine-3'-phosphate + a 5'-hydroxy-ribonucleotide-3'-[RNA].. It catalyses the reaction an [RNA] containing uridine + H2O = an [RNA]-3'-uridine-3'-phosphate + a 5'-hydroxy-ribonucleotide-3'-[RNA].. Functionally, endonuclease that catalyzes the cleavage of RNA on the 3' side of pyrimidine nucleotides. Acts on single-stranded and double-stranded RNA. This is Ribonuclease pancreatic (RNASE1) from Sus scrofa (Pig).